The sequence spans 100 residues: Aspartyl/glutamyl-tRNA(Asn/Gln) amidotransferase subunit C (100 aa).

Belongs to the GatC family. As to quaternary structure, heterotrimer of A, B and C subunits.

The enzyme catalyses L-glutamyl-tRNA(Gln) + L-glutamine + ATP + H2O = L-glutaminyl-tRNA(Gln) + L-glutamate + ADP + phosphate + H(+). The catalysed reaction is L-aspartyl-tRNA(Asn) + L-glutamine + ATP + H2O = L-asparaginyl-tRNA(Asn) + L-glutamate + ADP + phosphate + 2 H(+). Its function is as follows. Allows the formation of correctly charged Asn-tRNA(Asn) or Gln-tRNA(Gln) through the transamidation of misacylated Asp-tRNA(Asn) or Glu-tRNA(Gln) in organisms which lack either or both of asparaginyl-tRNA or glutaminyl-tRNA synthetases. The reaction takes place in the presence of glutamine and ATP through an activated phospho-Asp-tRNA(Asn) or phospho-Glu-tRNA(Gln). This is Aspartyl/glutamyl-tRNA(Asn/Gln) amidotransferase subunit C from Streptococcus equi subsp. zooepidemicus (strain MGCS10565).